Consider the following 493-residue polypeptide: Cytochrome P450 2E1 (493 aa).

Substrate is bound at residue 298–303 (FAGTET). A heme-binding site is contributed by Cys-437.

It belongs to the cytochrome P450 family. Interacts with chaperones HSP70 and HSP90; this interaction is required for initial targeting to mitochondria. It depends on heme as a cofactor. In terms of tissue distribution, highest level in the liver and to a lesser extent in the kidney, with a higher level in the male kidney than in the female.

It is found in the endoplasmic reticulum membrane. The protein localises to the microsome membrane. Its subcellular location is the mitochondrion inner membrane. It carries out the reaction an organic molecule + reduced [NADPH--hemoprotein reductase] + O2 = an alcohol + oxidized [NADPH--hemoprotein reductase] + H2O + H(+). It catalyses the reaction (5Z,8Z,11Z)-eicosatrienoate + reduced [NADPH--hemoprotein reductase] + O2 = 19-hydroxy-(5Z,8Z,11Z)-eicosatrienoate + oxidized [NADPH--hemoprotein reductase] + H2O + H(+). The enzyme catalyses (5Z,8Z,11Z,14Z,17Z)-eicosapentaenoate + reduced [NADPH--hemoprotein reductase] + O2 = 19-hydroxy-(5Z,8Z,11Z,14Z,17Z)-eicosapentaenoate + oxidized [NADPH--hemoprotein reductase] + H2O + H(+). The catalysed reaction is (4Z,7Z,10Z,13Z,16Z,19Z)-docosahexaenoate + reduced [NADPH--hemoprotein reductase] + O2 = 21-hydroxy-(4Z,7Z,10Z,13Z,16Z,19Z)-docosahexaenoate + oxidized [NADPH--hemoprotein reductase] + H2O + H(+). It carries out the reaction dodecanoate + reduced [NADPH--hemoprotein reductase] + O2 = 11-hydroxydodecanoate + oxidized [NADPH--hemoprotein reductase] + H2O + H(+). It catalyses the reaction tetradecanoate + reduced [NADPH--hemoprotein reductase] + O2 = 13-hydroxytetradecanoate + oxidized [NADPH--hemoprotein reductase] + H2O + H(+). The enzyme catalyses 4-nitrophenol + NADPH + O2 + H(+) = 4-nitrocatechol + NADP(+) + H2O. It functions in the pathway lipid metabolism; fatty acid metabolism. The omega-1 hydroxylase activity is stimulated by cytochrome b5. A cytochrome P450 monooxygenase involved in the metabolism of fatty acids. Mechanistically, uses molecular oxygen inserting one oxygen atom into a substrate, and reducing the second into a water molecule, with two electrons provided by NADPH via cytochrome P450 reductase (NADPH--hemoprotein reductase). Catalyzes the hydroxylation of carbon-hydrogen bonds. Hydroxylates fatty acids specifically at the omega-1 position displaying the highest catalytic activity for saturated fatty acids. May be involved in the oxidative metabolism of xenobiotics. This chain is Cytochrome P450 2E1 (Cyp2e1), found in Mus musculus (Mouse).